A 224-amino-acid polypeptide reads, in one-letter code: Large ribosomal subunit protein uL4 (224 aa).

Positions 54 to 73 (NRSEVSHSTKKPFRQKGTGN) are disordered.

This sequence belongs to the universal ribosomal protein uL4 family. Part of the 50S ribosomal subunit.

Functionally, one of the primary rRNA binding proteins, this protein initially binds near the 5'-end of the 23S rRNA. It is important during the early stages of 50S assembly. It makes multiple contacts with different domains of the 23S rRNA in the assembled 50S subunit and ribosome. Its function is as follows. Forms part of the polypeptide exit tunnel. The polypeptide is Large ribosomal subunit protein uL4 (Chlamydia felis (strain Fe/C-56) (Chlamydophila felis)).